The chain runs to 321 residues: Cytoskeleton protein RodZ (321 aa).

At 1–111 (MNTEATHDQN…LGKRRKKRDG (111 aa)) the chain is on the cytoplasmic side. The HTH cro/C1-type domain maps to 19-71 (LRNAREQLGLSQQAVAERLCLKVSTVRDIEEDKAPSDLASTFLRGYIRSYARL). The segment at residues 30–49 (QQAVAERLCLKVSTVRDIEE) is a DNA-binding region (H-T-H motif). Residues 112–132 (WLMSFTWLVLFVVVGLTGAWW) traverse the membrane as a helical; Signal-anchor for type II membrane protein segment. Topologically, residues 133-321 (WQNHKAQQEE…TINAEPTSAQ (189 aa)) are periplasmic. Residues 167 to 190 (DTRAAASQDTTPAETAPAAPVDST) form a disordered region. Over residues 176 to 190 (TTPAETAPAAPVDST) the composition is skewed to low complexity.

It belongs to the RodZ family.

The protein resides in the cell inner membrane. Functionally, cytoskeletal protein that is involved in cell-shape control through regulation of the length of the long axis. The sequence is that of Cytoskeleton protein RodZ from Salmonella arizonae (strain ATCC BAA-731 / CDC346-86 / RSK2980).